The sequence spans 523 residues: MNSFPNDDLVYEILLRLPAKSVARCSCVSKLRRSILSRQDFTELFLTKSSARPRLLFGVKRANGEGLFFSSTQPRNSYEKSSLVVAADFHTKFSEVISREICSYASGLIYLSDMRISVNDEDVVRAICNPITGNYLGFDPIDKQFKVLFMAYPSGPDDHKILTLGTRRMRWRKIHCPLTHDPFCEGICINGVLYYLAIQIDEPLVNQRSFVIVCFDVRFEKFTFIDVDCFYHLINYKGKLGGIDWKHGNANGSRTFELSMWVLEDVEKHEWSKYDCTFLEYEVMFYNISLAVGMTATCEIVLSEKFASKSFYVFYFNPERETLQRVEIQGLENHCRVYTITDHVEDLNVNYKRKHKMALVRRFLAAKKIIGGSVAKLRKETSAILYLNRYWSYPASTTLINYKGKVGVINLTHAYERVFPLQLRMTVLEDFEKQEWSTYVYTLMAENIVVKYVSVVGMTATGDIVLVKTNACKPFYVFYFNPGRNTLLSVEIQGVGEDHKCLNFHTVCAFVDHVEDLQFSFKN.

One can recognise an F-box domain in the interval 4 to 44 (FPNDDLVYEILLRLPAKSVARCSCVSKLRRSILSRQDFTEL).

In Arabidopsis thaliana (Mouse-ear cress), this protein is Putative F-box protein At1g30925.